The chain runs to 523 residues: Glycerate kinase (523 aa).

S60 is modified (phosphoserine). Position 200 is an N6-acetyllysine (K200).

This sequence belongs to the glycerate kinase type-2 family.

The protein resides in the cytoplasm. It catalyses the reaction (R)-glycerate + ATP = (2R)-3-phosphoglycerate + ADP + H(+). The protein is Glycerate kinase (GLYCTK) of Bos taurus (Bovine).